A 355-amino-acid polypeptide reads, in one-letter code: IGF-like family receptor 1 (355 aa).

Positions 1–22 (MGPGRCLLTALLLLALAPPPEA) are cleaved as a signal peptide. The Extracellular portion of the chain corresponds to 23 to 163 (SQYCGRLEYW…PQQAWPNFLP (141 aa)). Residues 120–147 (KGHCPLTPGNPGAPSSQERSSPASSIAW) are disordered. The segment covering 132 to 144 (APSSQERSSPASS) has biased composition (low complexity). Residues 164-184 (LVVLVLLLTLAVIAILLFILL) traverse the membrane as a helical segment. At 185-355 (WHLCWPKEKA…KLGSSGVCWA (171 aa)) the chain is on the cytoplasmic side.

It is found in the cell membrane. Functionally, probable cell membrane receptor for the IGF-like family proteins. Binds IGFL1 and IGFL3 with a higher affinity. May also bind IGFL2. This chain is IGF-like family receptor 1 (IGFLR1), found in Homo sapiens (Human).